We begin with the raw amino-acid sequence, 589 residues long: (E)-beta-ocimene synthase, chloroplastic (589 aa).

The N-terminal 25 residues, 1 to 25 (MAAHNLCFNSAFVCNVHHQKTQHFP), are a transit peptide targeting the chloroplast. 5 residues coordinate (2E,6E)-farnesyl diphosphate: Arg-302, Asp-339, Asp-343, Arg-480, and Asn-483. Mg(2+) is bound by residues Asp-339 and Asp-343. Residues 339-343 (DDIYD) carry the DDXXD motif motif. Mg(2+) is bound by residues Asn-483, Thr-487, and Glu-491.

The protein belongs to the terpene synthase family. Tpsb subfamily. The cofactor is Mg(2+). Mn(2+) serves as cofactor. In terms of tissue distribution, expressed exclusively in flowers.

It localises to the plastid. The protein localises to the chloroplast. It carries out the reaction (2E,6E)-farnesyl diphosphate = (3E,6E)-alpha-farnesene + diphosphate. Its pathway is secondary metabolite biosynthesis; terpenoid biosynthesis. Predominantly involved in monoterpene (C10) biosynthesis. Using GPP as substrate, the major product is (E)-beta-ocimene with minor amounts of (Z)-beta-ocimene and myrcene. Using FPP as substrate, could also be able to synthesize in vitro sesquiterpenes (C15) with (E,E)-alpha-farnesene as the major product and with (Z,E)-alpha-farnesene and (E,E)-beta-farnesene as minor products. This chain is (E)-beta-ocimene synthase, chloroplastic (TPS02), found in Arabidopsis thaliana (Mouse-ear cress).